The chain runs to 30 residues: Superoxide dismutase [Cu-Zn] 1 (30 aa).

This sequence belongs to the Cu-Zn superoxide dismutase family. Requires Cu cation as cofactor. The cofactor is Zn(2+). In terms of tissue distribution, expressed in fruits, leaves and pollen grains.

Its subcellular location is the cytoplasm. It is found in the endoplasmic reticulum. The enzyme catalyses 2 superoxide + 2 H(+) = H2O2 + O2. Inhibited by KCN and H(2)O(2). Its function is as follows. Destroys radicals which are normally produced within the cells and which are toxic to biological systems. Probably involved in the protection against oxidative stress during pollen development. The protein is Superoxide dismutase [Cu-Zn] 1 of Olea europaea (Common olive).